A 198-amino-acid chain; its full sequence is uncharacterized protein (198 aa).

The HTH tetR-type domain maps to 11-71 (EGTHKAILSA…DSFLSTATDR (61 aa)). Positions 34–53 (TVDKIAERAKVSKATIYKWW) form a DNA-binding region, H-T-H motif.

This is an uncharacterized protein from Bacillus subtilis (strain 168).